Here is a 574-residue protein sequence, read N- to C-terminus: Calcium-dependent protein kinase 9 (574 aa).

Residues 1–64 (MGNTCCVAPA…RARAKPNPYD (64 aa)) form a disordered region. G2 is lipidated: N-myristoyl glycine. A compositionally biased stretch (low complexity) spans 28–40 (KSPAPSATTTTAT). Residues 101–359 (YQLGRELGRG…AQQVLDHPWL (259 aa)) enclose the Protein kinase domain. ATP-binding positions include 107-115 (LGRGEFGVT) and K130. D225 serves as the catalytic Proton acceptor. The interval 365–395 (APNVPLGDVVRARLKQFSLMNRLKKKAMRVI) is autoinhibitory domain. EF-hand domains follow at residues 402–437 (EEVE…VGSK), 438–473 (LAEP…LQRL), 474–509 (SNDN…DSGH), and 510–545 (ADDA…GTDW). Ca(2+) is bound by residues D415, D417, N419, R421, E426, D451, D453, N455, Y457, E462, D487, D489, S491, Y493, E498, D523, D525, D527, R529, and E534.

This sequence belongs to the protein kinase superfamily. Ser/Thr protein kinase family. CDPK subfamily. As to expression, expressed in leaf blades and stems. Expressed at low levels in anthers and spikelets.

It is found in the membrane. It carries out the reaction L-seryl-[protein] + ATP = O-phospho-L-seryl-[protein] + ADP + H(+). The enzyme catalyses L-threonyl-[protein] + ATP = O-phospho-L-threonyl-[protein] + ADP + H(+). Activated by calcium. Autophosphorylation may play an important role in the regulation of the kinase activity. Functionally, may play a role in signal transduction pathways that involve calcium as a second messenger. Functions in signal transduction pathways that positively regulate responses to drought, osmotic, and dehydration stress. Regulates expression of stress-associated genes in response to drought. Involved in tolerance to drought stress by increasing proline and soluble sugars, and improving stomatal closure. Required for pollen maturation and spikelet fertility. This chain is Calcium-dependent protein kinase 9, found in Oryza sativa subsp. japonica (Rice).